A 103-amino-acid polypeptide reads, in one-letter code: Large ribosomal subunit protein bL21 (103 aa).

It belongs to the bacterial ribosomal protein bL21 family. In terms of assembly, part of the 50S ribosomal subunit. Contacts protein L20.

This protein binds to 23S rRNA in the presence of protein L20. In Vibrio cholerae serotype O1 (strain ATCC 39541 / Classical Ogawa 395 / O395), this protein is Large ribosomal subunit protein bL21.